Consider the following 721-residue polypeptide: Catalase-peroxidase (721 aa).

A cross-link (tryptophyl-tyrosyl-methioninium (Trp-Tyr) (with M-249)) is located at residues 95-223 (WHSAGSYRLF…LGAVHMGLIY (129 aa)). Residue H96 is the Proton acceptor of the active site. The tryptophyl-tyrosyl-methioninium (Tyr-Met) (with W-95) cross-link spans 223-249 (YVNPQGRDGKPDPLKSAHDVRVTFKRM). H264 serves as a coordination point for heme b.

Belongs to the peroxidase family. Peroxidase/catalase subfamily. As to quaternary structure, homodimer or homotetramer. Heme b is required as a cofactor. In terms of processing, formation of the three residue Trp-Tyr-Met cross-link is important for the catalase, but not the peroxidase activity of the enzyme.

The catalysed reaction is H2O2 + AH2 = A + 2 H2O. It carries out the reaction 2 H2O2 = O2 + 2 H2O. Bifunctional enzyme with both catalase and broad-spectrum peroxidase activity. This chain is Catalase-peroxidase, found in Parvibaculum lavamentivorans (strain DS-1 / DSM 13023 / NCIMB 13966).